The sequence spans 166 residues: Peptide methionine sulfoxide reductase MsrA (166 aa).

Cys-11 is an active-site residue.

It belongs to the MsrA Met sulfoxide reductase family.

It catalyses the reaction L-methionyl-[protein] + [thioredoxin]-disulfide + H2O = L-methionyl-(S)-S-oxide-[protein] + [thioredoxin]-dithiol. The enzyme catalyses [thioredoxin]-disulfide + L-methionine + H2O = L-methionine (S)-S-oxide + [thioredoxin]-dithiol. Functionally, has an important function as a repair enzyme for proteins that have been inactivated by oxidation. Catalyzes the reversible oxidation-reduction of methionine sulfoxide in proteins to methionine. This is Peptide methionine sulfoxide reductase MsrA from Lachnoclostridium phytofermentans (strain ATCC 700394 / DSM 18823 / ISDg) (Clostridium phytofermentans).